A 1508-amino-acid chain; its full sequence is MSEKPFVDAPPPEDGVAHQVSPHDNGSLSEEANSINEYTGFGAHQEGEIRELARTFTNMSHDSGHDLSKTNTSQDLLKYLSHMSEVPGVEPFDPEQISEQLNPDSPNFNAKFWVKNMRKLFDSNPDYYKPSKLGLAYRNLRAYGVAADSDYQPTVSNGLWKMAVDYWHDMRKIDESRCFDILKTMDGYFKPGEVTVVLGRPGSGCSTLLKTIACNTYGFHIGEESQISYDGMTPDEIHKHHRGDVVYSAETDVHFPHLSVGDTLEFAAKLRTPQNRGEVSRLEHAKHMASVTMATYGLSHTRNTPVGNDFVRGVSGGERKRVSIAEVSLSGANIQCWDNATRGLDAATALEFIRALKTSAAILDATPLIAIYQCSQDAYDLFDNVIVLYEGYQIFFGKASEAKQFFLDMGYECPQRQTTADFLTSLTNPEERVVKPGFENKVPRTAKEFSDYWRNSSNYKVLTAGIDKYLAEVADGSQREAYRASHVAKQSDHTRPSSPYTVSFFMQTRYIIGRNFLRMKGDPSIVIFSIFGQGVMGLILSSVFYNLQPTTGSFYYRGAAMFFAVLFNAFASLLEIMSLFEARPIVEKHKKYALYRPSADALASIISELPVKLCMSTCFNFSFYFMVHFRRDPGRFFFYWLFCGLCTLCMSHMFRSLGAVSTSLAAAMTPATSVLLAMVIFTGFVIPIPSMLGWCRWIQYINPVSYVFESLMVNEFHGRKFECAQFVPSGGPYDQVAAVNRVCSTAGARPGEDFVDGTAYLQTSFEYVNAHKWRNLGIVVAYIVVFLGVYIALTEFNKGAMQKGEIALFLRGSLKKVRKQREQNEAKVNDVENNLPNEKISYSDAMEKDSGESSTSDDKLPNQRQIFHWKDLTYQVKIKAENRVILNHVDGWVKPGQITALMGASGAGKTTLLNCLSERLTTGTVTDGVRMVNGHGLDSSFQRSIGYVQQQDIHLATSTVREALTFSAYLRQPSHVSKKEKDEYVDYVIDLLEMGAYSDALVGVAGEGLNVEQRKRLTIGVELVAKPKLLLFLDEPTSGLDSQTAWSICKLMRKLANHGQAILCTIHQPSAILLQEFDRLLFLQKGGKTVYFGDLGKNCQGLIDYFEKHGAHPCPPDANPAEWMLEVVGAAPGSKAAQDYFEVWRNSEEYQEVQRELAYMENELGKLPVDEDPESRKKYATSLIKQYFIVTWRTFQQYWRSPGYIYSKFFLVITASLFNGFAFFHSGTSQQGLQNQMFSMFMFYMPLQTLIQQMLPYYVMQREIYEVREAPSRTFSWFAFIASQITTEIPFQVVLGTVAFFCWYYPVGLYQNATPTDTVHERGALMWLLVTAFYVYTISLGQMVVAFMEIADNAANMVNLMFIMCLNFCGVLATPEALPGFWIFMYRCNPFTYLIQAMLSTGLANTKIVCSSREILHFQPPSGQTCGQYMQQFISAAGGYLLDESATDQCDFCAMSQTNTFLDSVHAVYSERWRNFGIFIAFIAINMIGTIFFYWLARVPKSSKSKNH.

A disordered region spans residues 1 to 30; the sequence is MSEKPFVDAPPPEDGVAHQVSPHDNGSLSE. Over 1–524 the chain is Cytoplasmic; it reads MSEKPFVDAP…NFLRMKGDPS (524 aa). The 251-residue stretch at 165–415 folds into the ABC transporter 1 domain; sequence DYWHDMRKID…FLDMGYECPQ (251 aa). A helical transmembrane segment spans residues 525–545; that stretch reads IVIFSIFGQGVMGLILSSVFY. Residues 546–559 are Extracellular-facing; that stretch reads NLQPTTGSFYYRGA. A helical transmembrane segment spans residues 560–580; sequence AMFFAVLFNAFASLLEIMSLF. The Cytoplasmic segment spans residues 581-608; that stretch reads EARPIVEKHKKYALYRPSADALASIISE. A helical membrane pass occupies residues 609 to 629; sequence LPVKLCMSTCFNFSFYFMVHF. Residues 630 to 633 are Extracellular-facing; sequence RRDP. The chain crosses the membrane as a helical span at residues 634–654; that stretch reads GRFFFYWLFCGLCTLCMSHMF. The Cytoplasmic segment spans residues 655-673; that stretch reads RSLGAVSTSLAAAMTPATS. The helical transmembrane segment at 674 to 694 threads the bilayer; sequence VLLAMVIFTGFVIPIPSMLGW. Residues 695–775 lie on the Extracellular side of the membrane; sequence CRWIQYINPV…EYVNAHKWRN (81 aa). A helical transmembrane segment spans residues 776 to 796; it reads LGIVVAYIVVFLGVYIALTEF. Over 797 to 1203 the chain is Cytoplasmic; sequence NKGAMQKGEI…TFQQYWRSPG (407 aa). Residues 839–860 form a disordered region; sequence KISYSDAMEKDSGESSTSDDKL. Residues 845–860 show a composition bias toward basic and acidic residues; that stretch reads AMEKDSGESSTSDDKL. The region spanning 867-1110 is the ABC transporter 2 domain; sequence FHWKDLTYQV…GLIDYFEKHG (244 aa). 903-910 is a binding site for ATP; it reads GASGAGKT. The chain crosses the membrane as a helical span at residues 1204-1224; sequence YIYSKFFLVITASLFNGFAFF. Residues 1225-1239 lie on the Extracellular side of the membrane; that stretch reads HSGTSQQGLQNQMFS. The helical transmembrane segment at 1240–1260 threads the bilayer; the sequence is MFMFYMPLQTLIQQMLPYYVM. Topologically, residues 1261-1288 are cytoplasmic; the sequence is QREIYEVREAPSRTFSWFAFIASQITTE. Residues 1289–1309 traverse the membrane as a helical segment; it reads IPFQVVLGTVAFFCWYYPVGL. The Extracellular portion of the chain corresponds to 1310-1326; sequence YQNATPTDTVHERGALM. Residues 1327–1347 traverse the membrane as a helical segment; that stretch reads WLLVTAFYVYTISLGQMVVAF. At 1348-1362 the chain is on the cytoplasmic side; it reads MEIADNAANMVNLMF. Residues 1363–1383 traverse the membrane as a helical segment; it reads IMCLNFCGVLATPEALPGFWI. Over 1384-1475 the chain is Extracellular; it reads FMYRCNPFTY…HAVYSERWRN (92 aa). Residues 1476–1496 traverse the membrane as a helical segment; that stretch reads FGIFIAFIAINMIGTIFFYWL. Over 1497–1508 the chain is Cytoplasmic; that stretch reads ARVPKSSKSKNH.

Belongs to the ABC transporter superfamily.

The protein resides in the cell membrane. It carries out the reaction fluconazole(in) + ATP + H2O = fluconazole(out) + ADP + phosphate + H(+). The catalysed reaction is itraconazole(in) + ATP + H2O = itraconazole(out) + ADP + phosphate + H(+). The enzyme catalyses voriconazole(in) + ATP + H2O = voriconazole(out) + ADP + phosphate + H(+). The bis-benzodioxolylindolinone azoffluxin acts as an inhibitor of the transporter activity. Clorgyline analogs M19 and M25 inhibit the transcporter activity by uncoupling CDR1 ATPase activity from the active transport of substrates. Activity is also inhibited by beauvericin and oligomycin. Pleiotropic ABC efflux transporter that confers resistance to numerous chemicals including itraconazole, fluconazole, voriconazole and posaconazole. In Candidozyma auris (Yeast), this protein is Pleiotropic ABC efflux transporter of multiple drugs CDR1.